The primary structure comprises 890 residues: MTDVTIKTLAAERQTSVERLVQQFADAGIRKSADDSVSAQEKQTLIDHLNQKNSGPDKLTLQRKTRSTLNIPGTGGKSKSVQIEVRKKRTFVKRDPQEAERLAAEEQAQREAEEQARREAEESAKREAQQKAEREAAEQAKREAAEQAKREAAEKDKVSNQQDDMTKNAQAEKARREQEAAELKRKAEEEARRKLEEEARRVAEEARRMAEENKWTDNAEPTEDSSDYHVTTSQHARQAEDESDREVEGGRGRGRNAKAARPKKGNKHAESKADREEARAAVRGGKGGKRKGSSLQQGFQKPAQAVNRDVVIGETITVGELANKMAVKGSQVIKAMMKLGAMATINQVIDQETAQLVAEEMGHKVILRRENELEEAVMSDRDTGAAAEPRAPVVTIMGHVDHGKTSLLDYIRSTKVASGEAGGITQHIGAYHVETENGMITFLDTPGHAAFTSMRARGAQATDIVVLVVAADDGVMPQTIEAIQHAKAAQVPVVVAVNKIDKPEADPDRVKNELSQYGILPEEWGGESQFVHVSAKAGTGIDELLDAILLQAEVLELKAVRKGMASGAVIESFLDKGRGPVATVLVREGTLHKGDIVLCGFEYGRVRAMRNELGQEVLEAGPSIPVEILGLSGVPAAGDEVTVVRDEKKAREVALYRQGKFREVKLARQQKSKLENMFANMTEGEVHEVNIVLKADVQGSVEAISDSLLKLSTDEVKVKIIGSGVGGITETDATLAAASNAILVGFNVRADASARKVIEAESLDLRYYSVIYNLIDEVKAAMSGMLSPELKQQIIGLAEVRDVFKSPKFGAIAGCMVTEGVVKRHNPIRVLRDNVVIYEGELESLRRFKDDVNEVRNGMECGIGVKNYNDVRTGDVIEVFEIIEIQRTIA.

Residues 45-304 are disordered; sequence LIDHLNQKNS…LQQGFQKPAQ (260 aa). Over residues 67–81 the composition is skewed to polar residues; sequence STLNIPGTGGKSKSV. Residues 92–217 are compositionally biased toward basic and acidic residues; that stretch reads VKRDPQEAER…RMAEENKWTD (126 aa). The segment covering 252 to 266 has biased composition (basic residues); that stretch reads GRGRNAKAARPKKGN. A compositionally biased stretch (basic and acidic residues) spans 267-280; that stretch reads KHAESKADREEARA. A tr-type G domain is found at 389–558; that stretch reads PRAPVVTIMG…LLQAEVLELK (170 aa). Residues 398-405 form a G1 region; that stretch reads GHVDHGKT. 398–405 contacts GTP; sequence GHVDHGKT. The segment at 423–427 is G2; sequence GITQH. The G3 stretch occupies residues 444–447; it reads DTPG. Residues 444-448 and 498-501 contribute to the GTP site; these read DTPGH and NKID. Residues 498 to 501 form a G4 region; sequence NKID. The G5 stretch occupies residues 534–536; sequence SAK. Lys-808 is subject to N6-acetyllysine.

It belongs to the TRAFAC class translation factor GTPase superfamily. Classic translation factor GTPase family. IF-2 subfamily.

The protein resides in the cytoplasm. Its function is as follows. One of the essential components for the initiation of protein synthesis. Protects formylmethionyl-tRNA from spontaneous hydrolysis and promotes its binding to the 30S ribosomal subunits. Also involved in the hydrolysis of GTP during the formation of the 70S ribosomal complex. This Escherichia coli (strain 55989 / EAEC) protein is Translation initiation factor IF-2.